A 360-amino-acid polypeptide reads, in one-letter code: Cytochrome b-c1 complex subunit 2, mitochondrial (360 aa).

Residues 1 to 15 (MLSSRLQFAQQTARK) constitute a mitochondrion transit peptide.

The protein belongs to the peptidase M16 family. UQCRC2/QCR2 subfamily. In terms of assembly, component of the ubiquinol-cytochrome c oxidoreductase (cytochrome b-c1 complex, complex III, CIII), a multisubunit enzyme composed of 3 respiratory subunits cytochrome b, cytochrome c1 and Rieske protein, 2 core protein subunits, and additional low-molecular weight protein subunits. The complex exists as an obligatory dimer and forms supercomplexes (SCs) in the inner mitochondrial membrane with cytochrome c oxidase (complex IV, CIV).

Its subcellular location is the mitochondrion inner membrane. In terms of biological role, component of the ubiquinol-cytochrome c oxidoreductase, a multisubunit transmembrane complex that is part of the mitochondrial electron transport chain which drives oxidative phosphorylation. The respiratory chain contains 3 multisubunit complexes succinate dehydrogenase (complex II, CII), ubiquinol-cytochrome c oxidoreductase (cytochrome b-c1 complex, complex III, CIII) and cytochrome c oxidase (complex IV, CIV), that cooperate to transfer electrons derived from NADH and succinate to molecular oxygen, creating an electrochemical gradient over the inner membrane that drives transmembrane transport and the ATP synthase. The cytochrome b-c1 complex catalyzes electron transfer from ubiquinol to cytochrome c, linking this redox reaction to translocation of protons across the mitochondrial inner membrane, with protons being carried across the membrane as hydrogens on the quinol. In the process called Q cycle, 2 protons are consumed from the matrix, 4 protons are released into the intermembrane space and 2 electrons are passed to cytochrome c. This chain is Cytochrome b-c1 complex subunit 2, mitochondrial (QCR2), found in Kluyveromyces lactis (strain ATCC 8585 / CBS 2359 / DSM 70799 / NBRC 1267 / NRRL Y-1140 / WM37) (Yeast).